Here is a 266-residue protein sequence, read N- to C-terminus: Vitamin B12-binding protein (266 aa).

Positions 1-22 are cleaved as a signal peptide; the sequence is MAKSLFRALVALSFLAPLWLNA. The 242-residue stretch at 25 to 266 folds into the Fe/B12 periplasmic-binding domain; the sequence is RVITLSPANT…QLCNALSQVD (242 aa). Cyanocob(III)alamin contacts are provided by residues Tyr50 and 242-246; that span reads DWFER. A disulfide bond links Cys183 and Cys259.

This sequence belongs to the BtuF family. The complex is composed of two ATP-binding proteins (BtuD), two transmembrane proteins (BtuC) and a solute-binding protein (BtuF).

The protein resides in the periplasm. Functionally, part of the ABC transporter complex BtuCDF involved in vitamin B12 import. Binds vitamin B12 and delivers it to the periplasmic surface of BtuC. This Escherichia coli (strain K12) protein is Vitamin B12-binding protein (btuF).